The chain runs to 187 residues: Large ribosomal subunit protein uL5 (187 aa).

It belongs to the universal ribosomal protein uL5 family. Part of the 50S ribosomal subunit; part of the 5S rRNA/L5/L18/L25 subcomplex. Contacts the 5S rRNA and the P site tRNA. Forms a bridge to the 30S subunit in the 70S ribosome.

Its function is as follows. This is one of the proteins that bind and probably mediate the attachment of the 5S RNA into the large ribosomal subunit, where it forms part of the central protuberance. In the 70S ribosome it contacts protein S13 of the 30S subunit (bridge B1b), connecting the 2 subunits; this bridge is implicated in subunit movement. Contacts the P site tRNA; the 5S rRNA and some of its associated proteins might help stabilize positioning of ribosome-bound tRNAs. The sequence is that of Large ribosomal subunit protein uL5 from Mycobacteroides abscessus (strain ATCC 19977 / DSM 44196 / CCUG 20993 / CIP 104536 / JCM 13569 / NCTC 13031 / TMC 1543 / L948) (Mycobacterium abscessus).